The following is a 237-amino-acid chain: MIVIPAIDIIDGKCVRLTQGDYSRVQEYNLDPVQQAKYFEKEGARYLHVVDLDGAKKGSPVNFEVIKRIKESTSLSVECGGGIRDKKTINDYLLAGIDYIILGSVIFKNPEFVEDVLKRFGNERFIASLDFEEGYVKLSGWQEATRISVEEGILHIKKLGFQKLIYTDIKTDGMLKGHNFEAAKYIRSLFDGFLISSGGISSMNDVLKLKDIGVDGVIIGKALYTGHVKLNEIINLV.

D8 (proton acceptor) is an active-site residue. D130 acts as the Proton donor in catalysis.

Belongs to the HisA/HisF family.

It is found in the cytoplasm. It carries out the reaction 1-(5-phospho-beta-D-ribosyl)-5-[(5-phospho-beta-D-ribosylamino)methylideneamino]imidazole-4-carboxamide = 5-[(5-phospho-1-deoxy-D-ribulos-1-ylimino)methylamino]-1-(5-phospho-beta-D-ribosyl)imidazole-4-carboxamide. The protein operates within amino-acid biosynthesis; L-histidine biosynthesis; L-histidine from 5-phospho-alpha-D-ribose 1-diphosphate: step 4/9. The polypeptide is 1-(5-phosphoribosyl)-5-[(5-phosphoribosylamino)methylideneamino] imidazole-4-carboxamide isomerase (Caldicellulosiruptor saccharolyticus (strain ATCC 43494 / DSM 8903 / Tp8T 6331)).